The sequence spans 667 residues: DNA ligase (667 aa).

Residues 34-38, 83-84, and Glu-112 contribute to the NAD(+) site; these read DSEYD and SL. Lys-114 serves as the catalytic N6-AMP-lysine intermediate. Residues Arg-135, Glu-169, Lys-285, and Lys-309 each coordinate NAD(+). The Zn(2+) site is built by Cys-403, Cys-406, Cys-421, and Cys-426. The BRCT domain maps to 589–667; sequence ASDSYFAGKT…EARLISELKK (79 aa).

Belongs to the NAD-dependent DNA ligase family. LigA subfamily. It depends on Mg(2+) as a cofactor. Mn(2+) serves as cofactor.

The enzyme catalyses NAD(+) + (deoxyribonucleotide)n-3'-hydroxyl + 5'-phospho-(deoxyribonucleotide)m = (deoxyribonucleotide)n+m + AMP + beta-nicotinamide D-nucleotide.. Functionally, DNA ligase that catalyzes the formation of phosphodiester linkages between 5'-phosphoryl and 3'-hydroxyl groups in double-stranded DNA using NAD as a coenzyme and as the energy source for the reaction. It is essential for DNA replication and repair of damaged DNA. The protein is DNA ligase of Bacillus licheniformis (strain ATCC 14580 / DSM 13 / JCM 2505 / CCUG 7422 / NBRC 12200 / NCIMB 9375 / NCTC 10341 / NRRL NRS-1264 / Gibson 46).